The sequence spans 293 residues: 4-diphosphocytidyl-2-C-methyl-D-erythritol kinase (293 aa).

The active site involves Lys10. Residue 96–106 (PVASGIGGGSS) participates in ATP binding. Asp138 is an active-site residue.

The protein belongs to the GHMP kinase family. IspE subfamily.

It catalyses the reaction 4-CDP-2-C-methyl-D-erythritol + ATP = 4-CDP-2-C-methyl-D-erythritol 2-phosphate + ADP + H(+). It functions in the pathway isoprenoid biosynthesis; isopentenyl diphosphate biosynthesis via DXP pathway; isopentenyl diphosphate from 1-deoxy-D-xylulose 5-phosphate: step 3/6. Functionally, catalyzes the phosphorylation of the position 2 hydroxy group of 4-diphosphocytidyl-2C-methyl-D-erythritol. The sequence is that of 4-diphosphocytidyl-2-C-methyl-D-erythritol kinase from Chelativorans sp. (strain BNC1).